A 422-amino-acid chain; its full sequence is Enolase (422 aa).

Glutamine 162 is a binding site for (2R)-2-phosphoglycerate. Glutamate 204 acts as the Proton donor in catalysis. Positions 241, 285, and 312 each coordinate Mg(2+). Lysine 337, arginine 366, serine 367, and lysine 388 together coordinate (2R)-2-phosphoglycerate. Lysine 337 (proton acceptor) is an active-site residue.

This sequence belongs to the enolase family. Requires Mg(2+) as cofactor.

It localises to the cytoplasm. It is found in the secreted. Its subcellular location is the cell surface. It carries out the reaction (2R)-2-phosphoglycerate = phosphoenolpyruvate + H2O. It participates in carbohydrate degradation; glycolysis; pyruvate from D-glyceraldehyde 3-phosphate: step 4/5. Functionally, catalyzes the reversible conversion of 2-phosphoglycerate (2-PG) into phosphoenolpyruvate (PEP). It is essential for the degradation of carbohydrates via glycolysis. The polypeptide is Enolase (Streptococcus thermophilus).